The primary structure comprises 239 residues: Transcriptional activatory protein AadR (239 aa).

A nucleoside 3',5'-cyclic phosphate is bound at residue 27–149 (ICGELGPADH…FATRELSLAQ (123 aa)). The region spanning 158 to 231 (RSAEEKVAAF…PDGVRVLDPK (74 aa)) is the HTH crp-type domain. Residues 191-210 (RQDIADFLGLTIETVSRTFT) constitute a DNA-binding region (H-T-H motif).

Its function is as follows. Transcriptional activator of anaerobic gene expression. For aromatic acid degradation. Also required for the anaerobic degradation of benzoate. This is Transcriptional activatory protein AadR (aadR) from Rhodopseudomonas palustris (strain ATCC BAA-98 / CGA009).